The sequence spans 140 residues: UPF0179 protein Msp_0996 (140 aa).

Belongs to the UPF0179 family.

This is UPF0179 protein Msp_0996 from Methanosphaera stadtmanae (strain ATCC 43021 / DSM 3091 / JCM 11832 / MCB-3).